The following is a 243-amino-acid chain: tRNA pseudouridine synthase A (243 aa).

D53 serves as the catalytic Nucleophile. Y111 contacts substrate.

The protein belongs to the tRNA pseudouridine synthase TruA family. As to quaternary structure, homodimer.

The catalysed reaction is uridine(38/39/40) in tRNA = pseudouridine(38/39/40) in tRNA. Its function is as follows. Formation of pseudouridine at positions 38, 39 and 40 in the anticodon stem and loop of transfer RNAs. This Chlorobium phaeovibrioides (strain DSM 265 / 1930) (Prosthecochloris vibrioformis (strain DSM 265)) protein is tRNA pseudouridine synthase A.